The following is a 329-amino-acid chain: Ubiquitin carboxyl-terminal hydrolase isozyme L5 (329 aa).

The region spanning 7–225 (EWCLMESDPG…IRFNLMAIVS (219 aa)) is the UCH catalytic domain. Lysine 47 carries the N6-succinyllysine modification. The Nucleophile role is filled by cysteine 88. Lysine 158 is subject to N6-acetyllysine. The active-site Proton donor is histidine 164. N6-succinyllysine is present on lysine 289. Positions 291-319 (NYLPFIMELLKTLAEHQQLIPLVEKAKEK) constitute a ULD domain. The interval 313-329 (VEKAKEKQNAKKAQETK) is interaction with ADRM1.

Belongs to the peptidase C12 family. Component of the 19S (PA700) regulatory complex of the 26S proteasome. Interacts with ADRM1 and NFRKB; in vitro ADRM1 and NFRKB compete for interaction with UCHL5. Component of the INO80 complex; specifically part of a complex module associated with N-terminus of INO80.

The protein localises to the cytoplasm. The protein resides in the nucleus. The catalysed reaction is Thiol-dependent hydrolysis of ester, thioester, amide, peptide and isopeptide bonds formed by the C-terminal Gly of ubiquitin (a 76-residue protein attached to proteins as an intracellular targeting signal).. With respect to regulation, activated by ADRM1. Inhibited by interaction with NFRKB. In terms of biological role, protease that specifically cleaves 'Lys-48'-linked polyubiquitin chains. Deubiquitinating enzyme associated with the 19S regulatory subunit of the 26S proteasome. Putative regulatory component of the INO80 complex; however is inactive in the INO80 complex and is activated by a transient interaction of the INO80 complex with the proteasome via ADRM1. This chain is Ubiquitin carboxyl-terminal hydrolase isozyme L5 (UCHL5), found in Homo sapiens (Human).